Here is a 177-residue protein sequence, read N- to C-terminus: Bifunctional protein PyrR (177 aa).

Residues 99–111 (VVLVDDVLYTGRT) carry the PRPP-binding motif.

The protein belongs to the purine/pyrimidine phosphoribosyltransferase family. PyrR subfamily.

It catalyses the reaction UMP + diphosphate = 5-phospho-alpha-D-ribose 1-diphosphate + uracil. In terms of biological role, regulates the transcription of the pyrimidine nucleotide (pyr) operon in response to exogenous pyrimidines. Also displays a weak uracil phosphoribosyltransferase activity which is not physiologically significant. In Akkermansia muciniphila (strain ATCC BAA-835 / DSM 22959 / JCM 33894 / BCRC 81048 / CCUG 64013 / CIP 107961 / Muc), this protein is Bifunctional protein PyrR.